An 81-amino-acid chain; its full sequence is Sulfur carrier protein TusA (81 aa).

Cys-19 acts as the Cysteine persulfide intermediate in catalysis.

This sequence belongs to the sulfur carrier protein TusA family. Interacts with IscS.

It localises to the cytoplasm. Its pathway is tRNA modification. Its function is as follows. Sulfur carrier protein involved in sulfur trafficking in the cell. Part of a sulfur-relay system required for 2-thiolation during synthesis of 2-thiouridine of the modified wobble base 5-methylaminomethyl-2-thiouridine (mnm(5)s(2)U) in tRNA. Interacts with IscS and stimulates its cysteine desulfurase activity. Accepts an activated sulfur from IscS, which is then transferred to TusD, and thus determines the direction of sulfur flow from IscS to 2-thiouridine formation. Also appears to be involved in sulfur transfer for the biosynthesis of molybdopterin. The sequence is that of Sulfur carrier protein TusA from Cronobacter sakazakii (strain ATCC BAA-894) (Enterobacter sakazakii).